A 214-amino-acid polypeptide reads, in one-letter code: MLCSRGFQSSLSPLMDFYWPVRSLWPEVRPLLSQRDLLQRNLLEVKSSLELMAKLQQQIFEELDNVPSSLTIQPVSYKHDKDGEGFALTLDTKDFSPEELSVKQVGRKLRVSGKTEKKLDDGEGSYSYRCQEFRQEFDLPEKVNPETVTCSLAHDGKLHIQAPKNTLSGEEEVAERVVPINCSLDVKTPQFLSKTEGSITDTQKKQENTISKED.

A sHSP domain is found at 66 to 183; it reads VPSSLTIQPV…AERVVPINCS (118 aa). Residues 193–214 are disordered; it reads SKTEGSITDTQKKQENTISKED. A compositionally biased stretch (basic and acidic residues) spans 202–214; that stretch reads TQKKQENTISKED.

Belongs to the small heat shock protein (HSP20) family.

This is Heat shock protein 30 (hsp30) from Oncorhynchus tshawytscha (Chinook salmon).